Consider the following 463-residue polypeptide: uncharacterized protein (463 aa).

This is an uncharacterized protein from Saccharomyces cerevisiae (strain ATCC 204508 / S288c) (Baker's yeast).